We begin with the raw amino-acid sequence, 156 residues long: 6,7-dimethyl-8-ribityllumazine synthase (156 aa).

Residues F25, 59 to 61 (AFE), and 83 to 85 (AVI) each bind 5-amino-6-(D-ribitylamino)uracil. 88-89 (GT) is a binding site for (2S)-2-hydroxy-3-oxobutyl phosphate. The active-site Proton donor is H91. F116 provides a ligand contact to 5-amino-6-(D-ribitylamino)uracil. Residue R130 coordinates (2S)-2-hydroxy-3-oxobutyl phosphate.

This sequence belongs to the DMRL synthase family.

It catalyses the reaction (2S)-2-hydroxy-3-oxobutyl phosphate + 5-amino-6-(D-ribitylamino)uracil = 6,7-dimethyl-8-(1-D-ribityl)lumazine + phosphate + 2 H2O + H(+). It participates in cofactor biosynthesis; riboflavin biosynthesis; riboflavin from 2-hydroxy-3-oxobutyl phosphate and 5-amino-6-(D-ribitylamino)uracil: step 1/2. Catalyzes the formation of 6,7-dimethyl-8-ribityllumazine by condensation of 5-amino-6-(D-ribitylamino)uracil with 3,4-dihydroxy-2-butanone 4-phosphate. This is the penultimate step in the biosynthesis of riboflavin. In Desulfovibrio desulfuricans (strain ATCC 27774 / DSM 6949 / MB), this protein is 6,7-dimethyl-8-ribityllumazine synthase.